Here is a 241-residue protein sequence, read N- to C-terminus: DnaJ homolog subfamily C member 4 (241 aa).

Residues 34–99 (TYYELLGVHP…QSRRSYDDQL (66 aa)) form the J domain. Residues 88–99 (REQSRRSYDDQL) are compositionally biased toward basic and acidic residues. Residues 88–129 (REQSRRSYDDQLRSGSPPKSPRTTVHDKSAHQTHSSWTPPNA) form a disordered region. Polar residues predominate over residues 119-129 (QTHSSWTPPNA). A helical transmembrane segment spans residues 156 to 175 (VLGYCLLLMLAGMGLHYIAF). The segment at 212 to 241 (QQERQRLGQRQPPPSEPTQGPEIVPRGAGP) is disordered.

The protein localises to the membrane. The chain is DnaJ homolog subfamily C member 4 (DNAJC4) from Homo sapiens (Human).